Consider the following 511-residue polypeptide: Fusicocca-1,10(14)-diene-8beta,16-diol C-9 hydroxylase (511 aa).

A helical membrane pass occupies residues 7 to 29 (TVAALAAVFVAGTLLSRLASWIR). Residues N64, N163, and N343 are each glycosylated (N-linked (GlcNAc...) asparagine). Heme is bound at residue C450.

Belongs to the cytochrome P450 family. The cofactor is heme.

The protein resides in the membrane. It functions in the pathway mycotoxin biosynthesis. Functionally, cytochrome P450 monooxygenase; part of the 2 gene clusters that mediate the biosynthesis of fusicoccins, diterpene glucosides that display phytohormone-like activity and function as potent activators of plasma membrane H(+)-ATPases in plants by modifying 14-3-3 proteins and cause the plant disease constriction canker. The first step in the pathway is performed by the fusicoccadiene synthase PaFS that possesses both prenyl transferase and terpene cyclase activity, converting isopentenyl diphosphate and dimethylallyl diphosphate into geranylgeranyl diphosphate (GGDP) and successively converting GGDP into fusicocca-2,10(14)-diene, a precursor for fusicoccin H. The second step is the oxidation at the C-8 position by the cytochrome P450 monooxygenase PaP450-2 to yield fusicocca-2,10(14)-diene-8-beta-ol. The cytochrome P450 monooxygenase PaP450-1 then catalyzes the hydroxylation at the C-16 position to produce fusicocca-2,10(14)-diene-8-beta,16-diol. The dioxygenase fc-dox then catalyzes the 16-oxydation of fusicocca-2,10(14)-diene-8-beta,16-diol to yield an aldehyde (8-beta-hydroxyfusicocca-1,10(14)-dien-16-al). The short-chain dehydrogenase/reductase fc-sdr catalyzes the reduction of the aldehyde to yield fusicocca-1,10(14)-diene-8-beta,16-diol. The next step is the hydroxylation at C-9 performed by the cytochrome P450 monooxygenase PaP450-3 that leads to fusicoccin H aglycon which is glycosylated to fusicoccin H by the O-glycosyltransferase PaGT. Hydroxylation at C-12 by the cytochrome P450 monooxygenase PaP450-4 leads then to the production of fusicoccin Q and is followed by methylation by the O-methyltransferase PaMT to yield fusicoccin P. Fusicoccin P is further converted to fusicoccin J via prenylation by the O-glucose prenyltransferase PaPT. Cytochrome P450 monooxygenase PaP450-5 then performs hydroxylation at C-19 to yield dideacetyl-fusicoccin A which is acetylated to 3'-O-deacetyl-fusicoccin A by the O-acetyltransferase PaAT-2. Finally, a another acetylation by the O-acetyltransferase PaAT-1 yields fusicoccin A. In Phomopsis amygdali (Fusicoccum amygdali), this protein is Fusicocca-1,10(14)-diene-8beta,16-diol C-9 hydroxylase.